Reading from the N-terminus, the 459-residue chain is MLKIYNSISRQKEEFKPIQPGKIGMYVCGVTIYDLCHIGHGRTFVCFDMIVRYLRYRGYEVNYQRNITDVDDKIIKRANENGESCDSLTERLIGEMHADFDALNMVRPSFEPRATLHIDEIIDMVTRLLDRGHAYVAADGDVLFDVSSYAAYGRLSGQDLEQLQAGARVEVDENKRNPMDFVLWKMSKPGEPTWDSPWGPGRPGWHIECSAMNSKHLGLHFDIHGGGSDLQFPHHENEIAQSCCAHDTPYVNTWMHTGMVMVDREKMSKSLGNFFTIRDVLAHYDAQTVRYFLLSGHYRSQLNYSEDNLKQARASLERMYTALKGLDLTVEAAGADEFVSRFMAAMDDDFNTPEAYSVLFDMVREINRLKTSDMAAASQLGVALKELAEVLGILSSTPEAFLQGEGNADEVAEIEALIVERNRARAEKDWPAADVARDRLNALGVVLEDGPEGTTWRKK.

Cys-28 serves as a coordination point for Zn(2+). The 'HIGH' region motif lies at 30–40; sequence VTIYDLCHIGH. Zn(2+) contacts are provided by Cys-209, His-234, and Glu-238. The 'KMSKS' region signature appears at 266–270; sequence KMSKS. Lys-269 lines the ATP pocket.

This sequence belongs to the class-I aminoacyl-tRNA synthetase family. Monomer. Zn(2+) serves as cofactor.

Its subcellular location is the cytoplasm. The catalysed reaction is tRNA(Cys) + L-cysteine + ATP = L-cysteinyl-tRNA(Cys) + AMP + diphosphate. The polypeptide is Cysteine--tRNA ligase (Shewanella amazonensis (strain ATCC BAA-1098 / SB2B)).